Here is a 244-residue protein sequence, read N- to C-terminus: Biosynthetic peptidoglycan transglycosylase (244 aa).

A helical transmembrane segment spans residues 23–43 (LVVIGAWLAGILLFSFLPVPF).

The protein belongs to the glycosyltransferase 51 family.

It localises to the cell inner membrane. The enzyme catalyses [GlcNAc-(1-&gt;4)-Mur2Ac(oyl-L-Ala-gamma-D-Glu-L-Lys-D-Ala-D-Ala)](n)-di-trans,octa-cis-undecaprenyl diphosphate + beta-D-GlcNAc-(1-&gt;4)-Mur2Ac(oyl-L-Ala-gamma-D-Glu-L-Lys-D-Ala-D-Ala)-di-trans,octa-cis-undecaprenyl diphosphate = [GlcNAc-(1-&gt;4)-Mur2Ac(oyl-L-Ala-gamma-D-Glu-L-Lys-D-Ala-D-Ala)](n+1)-di-trans,octa-cis-undecaprenyl diphosphate + di-trans,octa-cis-undecaprenyl diphosphate + H(+). It participates in cell wall biogenesis; peptidoglycan biosynthesis. Functionally, peptidoglycan polymerase that catalyzes glycan chain elongation from lipid-linked precursors. The protein is Biosynthetic peptidoglycan transglycosylase of Pectobacterium carotovorum subsp. carotovorum (strain PC1).